The following is a 428-amino-acid chain: Sulfhydrogenase 1 subunit alpha (428 aa).

Ni(2+) contacts are provided by C65, C68, C418, and C421. C68 contacts Fe cation. C421 is a binding site for Fe cation.

Belongs to the [NiFe]/[NiFeSe] hydrogenase large subunit family. Heterotetramer of alpha, beta, gamma and delta subunits. The nickel-containing alpha and delta subunits constitute the hydrogenase activity. The beta and gamma subunits (flavin-containing dimer) constitute the sulfur reductase activity. The cofactor is Ni(2+). Fe cation serves as cofactor.

It is found in the cytoplasm. The catalysed reaction is H2 + NADP(+) = NADPH + H(+). Functionally, part of a bifunctional enzyme complex that functions as an NADPH-dependent hydrogen-evolving hydrogenase with sulfur-reducing activity. May play a role in hydrogen cycling during fermentative growth. Activity not exhibited with NAD. The alpha and delta subunits form the hydrogenase component that catalyzes the reduction of protons to evolve hydrogen. The protein is Sulfhydrogenase 1 subunit alpha of Pyrococcus furiosus (strain ATCC 43587 / DSM 3638 / JCM 8422 / Vc1).